The following is a 123-amino-acid chain: Small ribosomal subunit protein uS12 (123 aa).

Asp-89 carries the post-translational modification 3-methylthioaspartic acid.

Belongs to the universal ribosomal protein uS12 family. As to quaternary structure, part of the 30S ribosomal subunit. Contacts proteins S8 and S17. May interact with IF1 in the 30S initiation complex.

Functionally, with S4 and S5 plays an important role in translational accuracy. Interacts with and stabilizes bases of the 16S rRNA that are involved in tRNA selection in the A site and with the mRNA backbone. Located at the interface of the 30S and 50S subunits, it traverses the body of the 30S subunit contacting proteins on the other side and probably holding the rRNA structure together. The combined cluster of proteins S8, S12 and S17 appears to hold together the shoulder and platform of the 30S subunit. The protein is Small ribosomal subunit protein uS12 of Trichlorobacter lovleyi (strain ATCC BAA-1151 / DSM 17278 / SZ) (Geobacter lovleyi).